A 427-amino-acid polypeptide reads, in one-letter code: MTAASRANPYSIVSSEEDGLHLVTMSGANGFGNGKVHTRRRCRNRFVKKNGQCNIEFANMDEKSQRYLADMFTTCVDIRWRYMLLIFSLAFLASWLLFGIIFWVIAVAHGDLEPAEGRGRTPCVLQVHGFMAAFLFSIETQTTIGYGLRCVTEECPVAVFMVVAQSIVGCIIDSFMIGAIMAKMGRPKKRAQTLLFSHNAVVALRDGKLCLMWRVGNLRKSHIVEAHVRAQLIKPRVTEEGEYIPLDQIDIDVGFDKGLDRIFLVSPITILHEIDEASPLFGISRQDLETDDFEIVVILEGMVEATAMTTQARSSYLANEILWGHRFEPVLFEEKNQYKIDYSHFHKTYEVPSTPRCSAKDLVENKFLLPSANSFCYENELAFLSRDEEDEVATDRDGRSPQPEHDFDRLQASSGALERPYRRESEI.

Residues 1–77 lie on the Cytoplasmic side of the membrane; the sequence is MTAASRANPY…LADMFTTCVD (77 aa). C75 is modified (S-nitrosocysteine). The helical transmembrane segment at 78–104 threads the bilayer; sequence IRWRYMLLIFSLAFLASWLLFGIIFWV. A 1,2-diacyl-sn-glycero-3-phospho-(1D-myo-inositol-4,5-bisphosphate) contacts are provided by R79 and R81. Topologically, residues 105 to 129 are extracellular; sequence IAVAHGDLEPAEGRGRTPCVLQVHG. C123 and C155 form a disulfide bridge. The segment at residues 130 to 146 is an intramembrane region (helical; Pore-forming); the sequence is FMAAFLFSIETQTTIGY. Residues T143, I144, G145, and Y146 each coordinate K(+). The short motif at 143–148 is the Selectivity filter element; the sequence is TIGYGL. The Extracellular segment spans residues 147 to 155; sequence GLRCVTEEC. The helical transmembrane segment at 156 to 183 threads the bilayer; sequence PVAVFMVVAQSIVGCIIDSFMIGAIMAK. A 1,2-diacyl-sn-glycero-3-phospho-(1D-myo-inositol-4,5-bisphosphate) is bound by residues K183 and K188. Topologically, residues 184 to 427 are cytoplasmic; it reads MGRPKKRAQT…ERPYRRESEI (244 aa). Residues 387-427 are disordered; the sequence is DEEDEVATDRDGRSPQPEHDFDRLQASSGALERPYRRESEI. A compositionally biased stretch (basic and acidic residues) spans 393–409; sequence ATDRDGRSPQPEHDFDR. The PDZ-binding motif lies at 425–427; the sequence is SEI.

This sequence belongs to the inward rectifier-type potassium channel (TC 1.A.2.1) family. KCNJ12 subfamily. As to quaternary structure, homotetramer. Forms heteromer with KCNJ4. Can form heteromeric channels with Kir2.6/KCNJ18. Association, via its PDZ-recognition domain, with LIN7A, LIN7B, LIN7C, DLG1, CASK and APBA1 plays a key role in its localization and trafficking. In terms of tissue distribution, highest level in cerebellum. Moderately found in kidney, forebrain and skeletal muscle. Not detected in uterus, liver and pancreas.

The protein resides in the membrane. It is found in the cell membrane. Its subcellular location is the sarcolemma. It localises to the T-tubule. The catalysed reaction is K(+)(in) = K(+)(out). Its activity is regulated as follows. Activated by phosphatidylinositol 4,5-biphosphate (PtdIns(4,5)P2). PtdIns(4,5)P2 binding to the cytoplasmic side of the channel triggers a conformation change leading to channel opening. Inhibited by Ba(2+). Functionally, inward rectifying potassium channel that probably participates in controlling the resting membrane potential in electrically excitable cells. It probably participates in establishing action potential waveform and excitability of neuronal and muscle tissues. Inward rectifier potassium channels are characterized by a greater tendency to allow potassium to flow into the cell rather than out of it. Their voltage dependence is regulated by the concentration of extracellular potassium; as external potassium is raised, the voltage range of the channel opening shifts to more positive voltages. The inward rectification is mainly due to the blockage of outward current by internal magnesium. This is ATP-sensitive inward rectifier potassium channel 12 (Kcnj12) from Rattus norvegicus (Rat).